Here is a 308-residue protein sequence, read N- to C-terminus: MAFLYREPLERPGLVLRELIEKRDIVVAPGVYNPAVALLAERMGFEALYLSGAAITGSLAMPDLGLITLSELAMFTSYITRVVRVPVIVDADTGFGEAINVERTVRELERAGAAAIQIEDQVMPKKCGHLQGKALISPEDMVKKIIAAVGARRDALIVARTDARGVEGFEKAVERAQLYVEAGADIIFPEALTSLEEFREFARRVKAPLLANMTEFGKTPYITVDQFREAGYKIVIFPVTTFRASLKASETVLREIMEKGTQKDILDKLYTRTEFYDLIGYHDYEKRDAEVSRKAEELLARHNNSRTG.

Position 51-53 (51-53 (SGA)) interacts with substrate. Mg(2+) is bound by residues Asp90 and Asp92. Substrate-binding positions include 127 to 128 (CG), Arg160, Glu190, 212 to 214 (NMT), Arg243, and Arg272.

This sequence belongs to the isocitrate lyase/PEP mutase superfamily. Methylisocitrate lyase family. Homotetramer; dimer of dimers. Mg(2+) serves as cofactor.

It catalyses the reaction (2S,3R)-3-hydroxybutane-1,2,3-tricarboxylate = pyruvate + succinate. The protein operates within organic acid metabolism; propanoate degradation. In terms of biological role, involved in the catabolism of short chain fatty acids (SCFA) via the 2-methylcitrate cycle I (propionate degradation route). Catalyzes the thermodynamically favored C-C bond cleavage of (2R,3S)-2-methylisocitrate to yield pyruvate and succinate via an alpha-carboxy-carbanion intermediate. This chain is 2-methylisocitrate lyase, found in Aeropyrum pernix (strain ATCC 700893 / DSM 11879 / JCM 9820 / NBRC 100138 / K1).